The primary structure comprises 178 residues: Ribosome maturation factor RimP (178 aa).

The protein belongs to the RimP family.

Its subcellular location is the cytoplasm. In terms of biological role, required for maturation of 30S ribosomal subunits. The protein is Ribosome maturation factor RimP of Corynebacterium glutamicum (strain ATCC 13032 / DSM 20300 / JCM 1318 / BCRC 11384 / CCUG 27702 / LMG 3730 / NBRC 12168 / NCIMB 10025 / NRRL B-2784 / 534).